The primary structure comprises 195 residues: dTTP/UTP pyrophosphatase (195 aa).

Residue Asp-73 is the Proton acceptor of the active site.

This sequence belongs to the Maf family. YhdE subfamily. The cofactor is a divalent metal cation.

Its subcellular location is the cytoplasm. It catalyses the reaction dTTP + H2O = dTMP + diphosphate + H(+). It carries out the reaction UTP + H2O = UMP + diphosphate + H(+). Its function is as follows. Nucleoside triphosphate pyrophosphatase that hydrolyzes dTTP and UTP. May have a dual role in cell division arrest and in preventing the incorporation of modified nucleotides into cellular nucleic acids. The chain is dTTP/UTP pyrophosphatase from Exiguobacterium sibiricum (strain DSM 17290 / CCUG 55495 / CIP 109462 / JCM 13490 / 255-15).